A 183-amino-acid chain; its full sequence is Helofensin-2 (183 aa).

A signal peptide spans 1–26 (MQMDWLFIAVISGIGLLSSGVPGTQG). The C(6)C(4)C(9)C(6)CC 1; approximate repeat unit spans residues 27 to 64 (AYTTEQCRALNGSCNFYACFPKNVIIGKCDWWGWSCCA). A C(6)C(4)C(9)C(6)CC 2; approximate repeat occupies 65-101 (RTPLERCTAKKGTCTKTGCTKTDTDHGPCDGGAQCCQ). Residues 102 to 139 (RDPVKYCKFHGNVCGRGKCPMDHIPIGEQCMPGYPCCK) form a C(6)C(4)C(9)C(6)CC 3; approximate repeat. The C(6)C(4)C(9)C(6)CC 4; approximate repeat unit spans residues 140–177 (RDGPAYCKSKGGKCLRRCSQIVPTDIIGVCADGVPCCK).

The protein belongs to the beta-defensin family. Helofensin subfamily. In terms of tissue distribution, expressed by the mandibular venom gland.

The protein resides in the secreted. In terms of biological role, lethal toxin which possesses an inhibitory effect on direct electrical stimulation of the isolated hemi-diaphragm of mice. Neither hemorrhagic nor hemolytic activities are detected. Phospholipase A2 activity, proteolytic activity and arginine esterolytic activity are absent. This is Helofensin-2 from Heloderma suspectum cinctum (Banded Gila monster).